Reading from the N-terminus, the 397-residue chain is MGPHFTLLLAALANCLCPGRPCIKCDQFVTDALKTFENTYLNDHLPHDIHKNVMRMVNHEVSSFGVVTSAEDSYLGAVDENTLEQATWSFLKDLKRITDSDLKGELFIKELLWMLRHQKDIFNNLARQFQKEVLCPNKCGVMSQTLIWCLKCEKQLHICRKSLDCGERHIEVHRSEDLVLDCLLSWHRASKGLTDYSFYRVWENSSETLIAKGKEPYLTKSMVGPEDAGNYRCVLDTINQGHATVIRYDVTVLPPKHSEENQPPNIITQEEHETPVHVTPQTPPGQEPESELYPELHPELYPELIPTVAQNPEKKMKTRLLILLTLGFVVLVASIIISVLHFRKVSAKLKNASDEVKPTASGSKSDQSLSQQMGLKKASQADFNSDYSGDKSEATEN.

A signal peptide spans methionine 1–proline 21. Cystine bridges form between cysteine 22-cysteine 149, cysteine 25-cysteine 152, cysteine 135-cysteine 159, cysteine 139-cysteine 165, and cysteine 182-cysteine 233. Over cysteine 22–arginine 319 the chain is Extracellular. Positions tryptophan 148 to arginine 160 are important for interaction with IZUMO1R. Residues glutamate 167–threonine 251 enclose the Ig-like C2-type domain. Asparagine 204 is a glycosylation site (N-linked (GlcNAc...) asparagine). Residues glutamate 271–leucine 292 are disordered. Residues leucine 320–leucine 340 traverse the membrane as a helical segment. The Cytoplasmic portion of the chain corresponds to histidine 341 to asparagine 397. Residues asparagine 351–asparagine 397 are disordered. Residues alanine 360–methionine 373 show a composition bias toward polar residues. Serine 379 carries the post-translational modification Phosphoserine. The span at serine 388–asparagine 397 shows a compositional bias: basic and acidic residues.

It belongs to the Izumo family. In terms of assembly, monomer, homodimer; disulfide-linked and homooligomer; depending on the context. Interacts with IZUMO1R/JUNO. IZUMO1 and IZUMO1R/JUNO form a complex with 1:1 stoichiometry. In gamete recognition, IZUMO1R/JUNO first binds to monomeric IZUMO1. The weak, but specific interaction with IZUMO1R/JUNO induces IZUMO1 homodimerization. The process follows a tight binding phase where IZUMO1 bends the entire structure towards the sperm membrane side through a thiol-disulfide exchange reaction. The molecule no longer binds to IZUMO1R/JUNO and instead binds to a putative second oocyte receptor. Interacts with ACE3. Part of a oolemmal binding multimeric complex (IZUMO1 complex) composed at least of IZUMO1 and GLIPR1L1; the complex assemblage is influenced by the maturation status of the male germ cell. Interacts with GLIPR1L1. Interacts with FREY; the interaction retains IZUMO1 at the endoplasmic reticulum membrane and coordinates IZUMO1 complex assembly. Interacts with WDR54. Forms a complex with SPACA6 and TMEM81 on spermatocyte cell membrane. In terms of processing, N-glycosylated. Glycosylation is not essential for fusion and for proper protein trafficking in sperm. Post-translationally, phosphorylated. The cytoplasmic C-terminus is phosphorylated and undergoes phosphorylation changes during epididymal transit. As to expression, sperm-specific (at protein level). Detectable on sperm surface only after the acrosome reaction. Expressed in spermatozoa, more abundantly expressed in the head than the tail (at protein level).

Its subcellular location is the cell membrane. It localises to the cytoplasmic vesicle. The protein localises to the secretory vesicle. It is found in the acrosome membrane. Functionally, essential sperm cell-surface protein required for fertilization by acting as a ligand for IZUMO1R/JUNO receptor on egg. The IZUMO1:IZUMO1R/JUNO interaction is a necessary adhesion event between sperm and egg that is required for fertilization but is not sufficient for cell fusion. The ligand-receptor interaction probably does not act as a membrane 'fusogen'. Plays a critical role in sperm-oolemma binding prior to plasma membrane fusion. Can mediate cell-cell fusion in cultured mammalian cells independently of its binding to IZUMO1R/JUNO. This Mus musculus (Mouse) protein is Izumo sperm-egg fusion protein 1.